Here is an 85-residue protein sequence, read N- to C-terminus: UPF0386 protein Arad_1912 (85 aa).

Belongs to the UPF0386 family.

In Rhizobium rhizogenes (strain K84 / ATCC BAA-868) (Agrobacterium radiobacter), this protein is UPF0386 protein Arad_1912.